The sequence spans 165 residues: Acireductone dioxygenase (165 aa).

Fe(2+)-binding residues include histidine 90, histidine 92, glutamate 96, and histidine 134. Histidine 90, histidine 92, glutamate 96, and histidine 134 together coordinate Ni(2+).

It belongs to the acireductone dioxygenase (ARD) family. As to quaternary structure, monomer. Fe(2+) serves as cofactor. Requires Ni(2+) as cofactor.

It catalyses the reaction 1,2-dihydroxy-5-(methylsulfanyl)pent-1-en-3-one + O2 = 3-(methylsulfanyl)propanoate + CO + formate + 2 H(+). The catalysed reaction is 1,2-dihydroxy-5-(methylsulfanyl)pent-1-en-3-one + O2 = 4-methylsulfanyl-2-oxobutanoate + formate + 2 H(+). Its pathway is amino-acid biosynthesis; L-methionine biosynthesis via salvage pathway; L-methionine from S-methyl-5-thio-alpha-D-ribose 1-phosphate: step 5/6. Its function is as follows. Catalyzes 2 different reactions between oxygen and the acireductone 1,2-dihydroxy-3-keto-5-methylthiopentene (DHK-MTPene) depending upon the metal bound in the active site. Fe-containing acireductone dioxygenase (Fe-ARD) produces formate and 2-keto-4-methylthiobutyrate (KMTB), the alpha-ketoacid precursor of methionine in the methionine recycle pathway. Ni-containing acireductone dioxygenase (Ni-ARD) produces methylthiopropionate, carbon monoxide and formate, and does not lie on the methionine recycle pathway. The polypeptide is Acireductone dioxygenase (Rhodopseudomonas palustris (strain ATCC BAA-98 / CGA009)).